The following is a 304-amino-acid chain: Secreted mono- and diacylglycerol lipase MDL2 (304 aa).

Residues 1–19 form the signal peptide; sequence MILGRTISLFLGCSALVSG. A disulfide bridge links Cys-55 with Cys-297. Asn-102 and Asn-161 each carry an N-linked (GlcNAc...) asparagine glycan. Residue Ser-171 is the Nucleophile of the active site. Asp-228 is an active-site residue. Residue Asn-253 is glycosylated (N-linked (GlcNAc...) asparagine). Residue His-281 is part of the active site.

Belongs to the AB hydrolase superfamily. Lipase family. Class 3 subfamily.

The protein resides in the secreted. It localises to the cell wall. It catalyses the reaction a monoacylglycerol + H2O = glycerol + a fatty acid + H(+). The catalysed reaction is a diacylglycerol + H2O = a monoacylglycerol + a fatty acid + H(+). Functionally, secreted lipase involved in Dandruff and seborrheic dermatitis (D/SD) probably via lipase-mediated breakdown of sebaceous lipids and release of irritating free fatty acids. Shows activity against monoglyceride and diglyceride substrates, but not triglyceride substrates and does not exhibit regio-selective production of diacylglycerols. Hydrolyzes both 1,2- and 1,3-diacylglycerols. Also hydrolyzes distearin, dilinolein and dipalmitolein. Cleaves oleic acid from 1,2 isomers of diolein on both the 1 and the 2 position of the glycerol backbone, resulting mainly in free fatty acids but no monoolein is detected. Shows activity on monoolein and liberates mostly free fatty acids, but can also perform the reverse reaction and produce diolein. In Malassezia globosa (strain ATCC MYA-4612 / CBS 7966) (Dandruff-associated fungus), this protein is Secreted mono- and diacylglycerol lipase MDL2.